A 611-amino-acid polypeptide reads, in one-letter code: V-type proton ATPase catalytic subunit A (611 aa).

244–251 (GAFGCGKT) contributes to the ATP binding site.

The protein belongs to the ATPase alpha/beta chains family. V-ATPase is a heteromultimeric enzyme made up of two complexes: the ATP-hydrolytic V1 complex and the proton translocation V0 complex. The V1 complex consists of three catalytic AB heterodimers that form a heterohexamer, three peripheral stalks each consisting of EG heterodimers, one central rotor including subunits D and F, and the regulatory subunits C and H. The proton translocation complex V0 consists of the proton transport subunit a, a ring of proteolipid subunits c9c'', rotary subunit d and subunit e.

It is found in the cell membrane. Its subcellular location is the vacuole. It localises to the vesicle. It carries out the reaction ATP + H2O + 4 H(+)(in) = ADP + phosphate + 5 H(+)(out). With respect to regulation, ATP hydrolysis occurs at the interface between the nucleotide-binding domains of subunits A and B. ATP hydrolysis triggers a conformational change in the subunits D and F, which induces a shift of subunit d. The c-ring is subsequently rotated and results in a continuous proton translocation across the membrane. In terms of biological role, catalytic subunit of the V1 complex of vacuolar(H+)-ATPase (V-ATPase), a multisubunit enzyme composed of a peripheral complex (V1) that hydrolyzes ATP and a membrane integral complex (V0) that translocates protons. V-ATPase is responsible for acidifying and maintaining the pH of intracellular compartments and in some cell types, is targeted to the plasma membrane, where it is responsible for acidifying the extracellular environment. During the trophozoite stage, involved in the acidification of the extracellular space next to the cell membrane. This chain is V-type proton ATPase catalytic subunit A, found in Plasmodium falciparum (isolate 3D7).